A 136-amino-acid chain; its full sequence is Large ribosomal subunit protein uL16 (136 aa).

This sequence belongs to the universal ribosomal protein uL16 family. As to quaternary structure, part of the 50S ribosomal subunit.

Functionally, binds 23S rRNA and is also seen to make contacts with the A and possibly P site tRNAs. This Rickettsia typhi (strain ATCC VR-144 / Wilmington) protein is Large ribosomal subunit protein uL16.